The following is a 438-amino-acid chain: Gamma-glutamyl phosphate reductase (438 aa).

Belongs to the gamma-glutamyl phosphate reductase family.

It localises to the cytoplasm. The enzyme catalyses L-glutamate 5-semialdehyde + phosphate + NADP(+) = L-glutamyl 5-phosphate + NADPH + H(+). The protein operates within amino-acid biosynthesis; L-proline biosynthesis; L-glutamate 5-semialdehyde from L-glutamate: step 2/2. Catalyzes the NADPH-dependent reduction of L-glutamate 5-phosphate into L-glutamate 5-semialdehyde and phosphate. The product spontaneously undergoes cyclization to form 1-pyrroline-5-carboxylate. The sequence is that of Gamma-glutamyl phosphate reductase from Natronomonas pharaonis (strain ATCC 35678 / DSM 2160 / CIP 103997 / JCM 8858 / NBRC 14720 / NCIMB 2260 / Gabara) (Halobacterium pharaonis).